We begin with the raw amino-acid sequence, 297 residues long: UDP-N-acetylenolpyruvoylglucosamine reductase (297 aa).

In terms of domain architecture, FAD-binding PCMH-type spans 18–184; the sequence is QVGGPAEWYL…LSARLRLAPG (167 aa). Arginine 163 is a catalytic residue. Serine 214 functions as the Proton donor in the catalytic mechanism. Residue glutamate 285 is part of the active site.

It depends on FAD as a cofactor.

The protein resides in the cytoplasm. The catalysed reaction is UDP-N-acetyl-alpha-D-muramate + NADP(+) = UDP-N-acetyl-3-O-(1-carboxyvinyl)-alpha-D-glucosamine + NADPH + H(+). It participates in cell wall biogenesis; peptidoglycan biosynthesis. In terms of biological role, cell wall formation. The sequence is that of UDP-N-acetylenolpyruvoylglucosamine reductase from Gloeobacter violaceus (strain ATCC 29082 / PCC 7421).